Here is a 308-residue protein sequence, read N- to C-terminus: HTH-type transcriptional activator AllS (308 aa).

Residues 2 to 59 (FDPETLRTFISVAETGSFSKAAERLCKTTATTSYRIKLLEENTGVGLFFRTTRSVSLT) enclose the HTH lysR-type domain. Positions 19 to 38 (FSKAAERLCKTTATTSYRIK) form a DNA-binding region, H-T-H motif.

This sequence belongs to the LysR transcriptional regulatory family.

Functionally, positive regulator essential for the expression of allD operon. Binds to the allD promoter. The polypeptide is HTH-type transcriptional activator AllS (allS) (Salmonella typhi).